A 143-amino-acid polypeptide reads, in one-letter code: Transcriptional regulator MraZ (143 aa).

SpoVT-AbrB domains lie at 5-47 and 76-119; these read EFEH…PMTE and ATEC…SAER.

Belongs to the MraZ family. Forms oligomers.

The protein resides in the cytoplasm. It localises to the nucleoid. The polypeptide is Transcriptional regulator MraZ (Levilactobacillus brevis (strain ATCC 367 / BCRC 12310 / CIP 105137 / JCM 1170 / LMG 11437 / NCIMB 947 / NCTC 947) (Lactobacillus brevis)).